Here is a 1499-residue protein sequence, read N- to C-terminus: Rho GTPase-activating protein 35 (1499 aa).

The has GTPase activity, required for proper localization stretch occupies residues 1-266; it reads MMMARKQDVR…IPYFEALKQQ (266 aa). Residues lysine 28, 33 to 37, leucine 52, serine 56, 95 to 97, 201 to 203, and 229 to 231 contribute to the GTP site; these read IGKSC, EQT, KCD, and SAR. FF domains lie at 270 to 327, 368 to 422, 429 to 483, and 485 to 550; these read IATA…HIHR, KLLE…HLEK, RAEM…HQKQ, and IDRA…HIHF. Tyrosine 308 is subject to Phosphotyrosine. Serine 589 carries the post-translational modification Phosphoserine. Residues 592–767 enclose the pG1 pseudoGTPase domain; that stretch reads DPNIDRINLV…LLDSKRNLNL (176 aa). 2 positions are modified to phosphoserine: serine 770 and serine 773. Positions 783-947 constitute a pG2 pseudoGTPase domain; sequence RIVMCLMCGD…FKDVVEKKNI (165 aa). Phosphoserine occurs at positions 970, 975, 985, and 1072. Tyrosine 1087 is modified (phosphotyrosine). At tyrosine 1105 the chain carries Phosphotyrosine; by ABL2 and PTK6. A compositionally biased stretch (polar residues) spans 1124 to 1141; it reads KAQSNGSGNGSDSEMDTS. A disordered region spans residues 1124 to 1148; the sequence is KAQSNGSGNGSDSEMDTSSLERGRK. Serine 1134, serine 1142, serine 1150, serine 1176, serine 1179, and serine 1221 each carry phosphoserine. Residues 1177–1207 form a disordered region; the sequence is VGSDDELGPIRKKEEDQASQGYKGDNAVIPY. A required for phospholipid binding and regulation of the substrate preference region spans residues 1213-1236; it reads PRRRNILRSLRRNTKKPKPKPRPS. At threonine 1226 the chain carries Phosphothreonine. Serine 1236 carries the post-translational modification Phosphoserine. The Rho-GAP domain maps to 1249 to 1436; that stretch reads VPLTTVVTPE…LFIQQCPFFF (188 aa). Positions 1446-1499 are disordered; the sequence is GAAPGSPSAMAPTVPFLTSTPATSQPSPPQSPPPTPQSPMQPLLSSQLQAEHTL. Positions 1448-1470 are enriched in low complexity; sequence APGSPSAMAPTVPFLTSTPATSQ. A compositionally biased stretch (pro residues) spans 1471 to 1484; it reads PSPPQSPPPTPQSP. Residues serine 1472 and serine 1476 each carry the phosphoserine modification. The residue at position 1480 (threonine 1480) is a Phosphothreonine. Position 1483 is a phosphoserine (serine 1483). Over residues 1485 to 1499 the composition is skewed to low complexity; that stretch reads MQPLLSSQLQAEHTL.

As to quaternary structure, interacts with RASA1. Interacts with the general transcription factor GTF2I, the interaction sequesters GTF2I in the cytoplasm. In terms of processing, phosphorylation of Tyr-1105 by PTK6 promotes the association with RASA1, inactivating RHOA while activating RAS. Phosphorylation at Tyr-308 by PDGFRA inhibits binding to GTF2I. Phosphorylated by PRKCA at Ser-1221 and Thr-1226, induces relocalization from the cytoplasm to regions of plasma membrane ruffling and prevents the binding and substrate specificity regulation by phospholipids. In brain, phosphorylated by FYN and SRC. During focal adhesion formation, phosphorylated by MAPK1 and MAPK3 at the C-terminal region, probably at Ser-1451, Ser-1476, Thr-1480 and Ser-1483. Phosphorylation by MAPK1 and MAPK3 inhibits GAP function and localizes ARGHAP35 away from newly forming focal adhesions and stress fibers in cells spreading on fibronectin. Phosphorylation at Ser-1476 and Thr-1480 by GSK3B requires priming by MAPK and inhibits RhoGAP activity and modulates polarized cell migration. In terms of tissue distribution, ubiquitously expressed.

It localises to the cytoplasm. The protein resides in the cytoskeleton. Its subcellular location is the cilium basal body. The protein localises to the nucleus. It is found in the cell membrane. Functionally, rho GTPase-activating protein (GAP). Binds several acidic phospholipids which inhibits the Rho GAP activity to promote the Rac GAP activity. This binding is inhibited by phosphorylation by PRKCA. Involved in cell differentiation as well as cell adhesion and migration, plays an important role in retinal tissue morphogenesis, neural tube fusion, midline fusion of the cerebral hemispheres and mammary gland branching morphogenesis. Transduces signals from p21-ras to the nucleus, acting via the ras GTPase-activating protein (GAP). Transduces SRC-dependent signals from cell-surface adhesion molecules, such as laminin, to promote neurite outgrowth. Regulates axon outgrowth, guidance and fasciculation. Modulates Rho GTPase-dependent F-actin polymerization, organization and assembly, is involved in polarized cell migration and in the positive regulation of ciliogenesis and cilia elongation. During mammary gland development, is required in both the epithelial and stromal compartments for ductal outgrowth. Represses transcription of the glucocorticoid receptor by binding to the cis-acting regulatory sequence 5'-GAGAAAAGAAACTGGAGAAACTC-3'; this function is however unclear and would need additional experimental evidences. The sequence is that of Rho GTPase-activating protein 35 from Rattus norvegicus (Rat).